We begin with the raw amino-acid sequence, 237 residues long: CDP-diacylglycerol--inositol 3-phosphatidyltransferase (237 aa).

The Cytoplasmic segment spans residues 1 to 12 (MGKNEQKDPNVY). A helical transmembrane segment spans residues 13 to 33 (FFVPNLIGFTRVFLVLISLYF). At 34-41 (MSWHPNYC) the chain is on the lumenal side. Residues 42–62 (TIVYLYSSLLDAFDGWAARKL) form a helical membrane-spanning segment. Asp-52 and Asp-55 together coordinate Mg(2+). A CDP-1,2-diacyl-sn-glycerol-binding residues include Gly-56, Arg-60, and Thr-66. Over 63 to 71 (HQATNFGAI) the chain is Cytoplasmic. The helical transmembrane segment at 72 to 92 (LDMVTDRCATSCLLCFLCAAY) threads the bilayer. Mg(2+)-binding residues include Asp-73 and Asp-77. The active-site Proton acceptor is Asp-77. Over 93–94 (PK) the chain is Lumenal. The chain crosses the membrane as a helical span at residues 95-115 (YAIIFQLLVSLDLASHYMHMY). The Cytoplasmic segment spans residues 116 to 144 (STLHQGASSHKTVTKKHNWMLRLYYGNNK). A helical membrane pass occupies residues 145-165 (VLFIFCAANEMFFVALYLLSF). Residues 166-185 (TPRTPPKLGYLPVPSFIYST) are Lumenal-facing. Residues 186 to 206 (GELPLSYPTLLAVLCGPICLA) form a helical membrane-spanning segment. Residues 207-237 (KQIINVVQLVNAANALVKMDVEQRRAAKKLQ) are Cytoplasmic-facing.

This sequence belongs to the CDP-alcohol phosphatidyltransferase class-I family. Mn(2+) serves as cofactor. Requires Mg(2+) as cofactor.

It is found in the microsome membrane. The protein localises to the endoplasmic reticulum membrane. Its subcellular location is the golgi apparatus membrane. It localises to the mitochondrion outer membrane. The enzyme catalyses a CDP-1,2-diacyl-sn-glycerol + myo-inositol = a 1,2-diacyl-sn-glycero-3-phospho-(1D-myo-inositol) + CMP + H(+). Its function is as follows. Catalyzes the synthesis of phosphatidylinositol (PtdIns). This Schizosaccharomyces pombe (strain 972 / ATCC 24843) (Fission yeast) protein is CDP-diacylglycerol--inositol 3-phosphatidyltransferase (pis1).